The sequence spans 83 residues: Acyl carrier protein (83 aa).

One can recognise a Carrier domain in the interval 2–77 (STIEEKVKTI…AAIDFISNSH (76 aa)). The residue at position 37 (Ser37) is an O-(pantetheine 4'-phosphoryl)serine.

It belongs to the acyl carrier protein (ACP) family. 4'-phosphopantetheine is transferred from CoA to a specific serine of apo-ACP by AcpS. This modification is essential for activity because fatty acids are bound in thioester linkage to the sulfhydryl of the prosthetic group.

It localises to the cytoplasm. It functions in the pathway lipid metabolism; fatty acid biosynthesis. Functionally, carrier of the growing fatty acid chain in fatty acid biosynthesis. This Blochmanniella pennsylvanica (strain BPEN) protein is Acyl carrier protein.